A 303-amino-acid polypeptide reads, in one-letter code: Sulfotransferase 6B1 (303 aa).

65–70 is a 3'-phosphoadenylyl sulfate binding site; sequence KCGSNW. H118 acts as the Proton acceptor in catalysis. 3'-phosphoadenylyl sulfate contacts are provided by residues R140, S148, Y203, 237 to 242, and 259 to 261; these read STFQAM and RKG.

Belongs to the sulfotransferase 1 family.

It localises to the cytoplasm. The protein localises to the cytosol. The enzyme catalyses thyroxine + 3'-phosphoadenylyl sulfate = thyroxine sulfate + adenosine 3',5'-bisphosphate + H(+). Sulfotransferase that utilizes 3'-phospho-5'-adenylyl sulfate (PAPS) as sulfonate donor to catalyze the sulfate conjugation of thyroxine. Involved in the metabolism of thyroxine. The sequence is that of Sulfotransferase 6B1 (SULT6B1) from Gorilla gorilla gorilla (Western lowland gorilla).